Here is a 307-residue protein sequence, read N- to C-terminus: Pseudouridine-5'-phosphate glycosidase (307 aa).

E28 acts as the Proton donor in catalysis. Substrate is bound by residues K89 and V109. D141 contacts Mn(2+). 143–145 (SAD) is a binding site for substrate. Residue K162 is the Nucleophile of the active site.

It belongs to the pseudouridine-5'-phosphate glycosidase family. In terms of assembly, homotrimer. Mn(2+) is required as a cofactor.

The enzyme catalyses D-ribose 5-phosphate + uracil = psi-UMP + H2O. Its function is as follows. Catalyzes the reversible cleavage of pseudouridine 5'-phosphate (PsiMP) to ribose 5-phosphate and uracil. Functions biologically in the cleavage direction, as part of a pseudouridine degradation pathway. This Nocardioides sp. (strain ATCC BAA-499 / JS614) protein is Pseudouridine-5'-phosphate glycosidase.